We begin with the raw amino-acid sequence, 1396 residues long: Melanoma inhibitory activity protein 2 (1396 aa).

The signal sequence occupies residues 1–22 (MAEVSVQRILLLVVSLAKCLEG). Over 23 to 604 (TKLLAHLKKC…YGFMSSALSP (582 aa)) the chain is Lumenal. The SH3 domain maps to 39–101 (TLISRVLALR…PRDAVEIEEV (63 aa)). Asn-59 is a glycosylation site (N-linked (GlcNAc...) asparagine). Disordered stretches follow at residues 197–288 (EGAG…VPDE) and 331–361 (ESNPPLQDIPSSVPPDEEVPAPCREISTDKE). Over residues 243-258 (SDTEPTQELALEEESD) the composition is skewed to acidic residues. Asn-366 carries N-linked (GlcNAc...) asparagine glycosylation. Disordered regions lie at residues 396–421 (DKGENEDGEVDNLKHPIGSDFDPEKE) and 525–557 (PMEEHEGVHFKPSSSKRNEDDSNSWADPEELSV). Residues 605–625 (IEILLESVVAALPEDMRADFN) lie within the membrane without spanning it. At 626-628 (PSG) the chain is on the lumenal side. A helical membrane pass occupies residues 629 to 649 (FSLELAVCVLSVGLLAVVLFL). At 650 to 1396 (WRGFRSIRSR…AADPPETQEA (747 aa)) the chain is on the cytoplasmic side. The mediates interaction with MIA3 stretch occupies residues 651 to 1243 (RGFRSIRSRF…RSYNMPSLDK (593 aa)). Coiled-coil stretches lie at residues 693–867 (YEGL…LVTS) and 914–1082 (AAKL…NRQK). The disordered stretch occupies residues 1103-1396 (PNTAFGREHS…AADPPETQEA (294 aa)). Residues 1105 to 1396 (TAFGREHSPY…AADPPETQEA (292 aa)) form a proline-rich domain (PRD); probably mediates interaction with COPII coat subunits region. Over residues 1135 to 1146 (LLEGPLRLSPLL) the composition is skewed to low complexity. Positions 1165 to 1179 (MNTERGESSYDRLSD) are enriched in basic and acidic residues. The span at 1252-1269 (MESSGNGTKDNLGNSNVP) shows a compositional bias: polar residues. Pro residues-rich tracts occupy residues 1331–1342 (RDFPGPPLPPFP) and 1351–1368 (GFPPYLPPRAGFFPPPPH).

Belongs to the MIA/OTOR family. As to quaternary structure, interacts with MIA3. Interacts with the COPII coat subunits SEC23A, SEC23B and maybe SEC24C. Interacts with PREB; recruits PREB to endoplasmic reticulum exit sites. Interacts with APOB. As to expression, isoform 1 is expressed in liver (at protein level). Isoform 2 is highly expressed in liver and weakly in testis.

It localises to the endoplasmic reticulum membrane. In terms of biological role, plays a role in the transport of cargos that are too large to fit into COPII-coated vesicles and require specific mechanisms to be incorporated into membrane-bound carriers and exported from the endoplasmic reticulum. Plays a role in the secretion of lipoproteins, pre-chylomicrons and pre-VLDLs, by participating in their export from the endoplasmic reticulum. Thereby, may play a role in cholesterol and triglyceride homeostasis. Required for collagen VII (COL7A1) secretion by loading COL7A1 into transport carriers and recruiting PREB/SEC12 at the endoplasmic reticulum exit sites. This chain is Melanoma inhibitory activity protein 2, found in Mus musculus (Mouse).